We begin with the raw amino-acid sequence, 489 residues long: Transmembrane protein 161A (489 aa).

The first 23 residues, 1–23 (MAVMGIQMVVTLLVASLMQRVSP), serve as a signal peptide directing secretion. The Extracellular portion of the chain corresponds to 24-98 (HYSFGRWLLC…INTMDALVLR (75 aa)). N34 is a glycosylation site (N-linked (GlcNAc...) asparagine). A helical membrane pass occupies residues 99 to 119 (YFLEYQWFIDFALYSTIIYLF). At 120 to 134 (TEAYYCVVDAQNEIN) the chain is on the cytoplasmic side. The chain crosses the membrane as a helical span at residues 135–155 (IGVLWCLMSIIFSIKVLFTVM). Residues 156–166 (KHYFRSEEGGE) are Extracellular-facing. Residues 167–187 (RSVCMTFAFFFLLIAMIVTIV) form a helical membrane-spanning segment. Residues 188–224 (RDEYLEFGLEPGLASVCHNLENFLAQQGWQWSMPFVK) lie on the Cytoplasmic side of the membrane. A helical transmembrane segment spans residues 225–245 (LAFKIALVALCAFLGGCLTFP). Over 246–264 (GLRLAQTHLDALKMAADRP) the chain is Extracellular. Residues 265–285 (MLQLLLHMSFLPPVIVVVLWI) traverse the membrane as a helical segment. Residues 286 to 304 (RPITRDFLLNAPMGKESVE) are Cytoplasmic-facing. A helical transmembrane segment spans residues 305–325 (LMSNSAYNTFRLWIIVLLCLL). Topologically, residues 326-370 (RFCLTRFHLQAYLCLADRWVEQMKREAGRISMLEIQRKISRIFCY) are extracellular. Residues 371–391 (LTVVALQYLAPVILTFHCVFM) form a helical membrane-spanning segment. The Cytoplasmic portion of the chain corresponds to 392–459 (LKSLGDYSWG…GLFTPLFFRG (68 aa)). Positions 413-432 (VDSSPVQSHSPTSEEEEDTE) are disordered. Residues 460 to 480 (IFSFLTWWVSVCQIITSLFGL) form a helical membrane-spanning segment. The Extracellular portion of the chain corresponds to 481–489 (YFHQYLGAS).

Belongs to the TMEM161 family.

It is found in the membrane. Functionally, may play a role in protection against oxidative stress. This chain is Transmembrane protein 161A (tmem161a), found in Xenopus laevis (African clawed frog).